The chain runs to 160 residues: uncharacterized protein (160 aa).

The helical transmembrane segment at 1 to 21 threads the bilayer; sequence MSIQTLIIISIVIFILWLTFT.

It belongs to the IIV-6 203L/325L family.

It is found in the membrane. This is an uncharacterized protein from Invertebrate iridescent virus 6 (IIV-6).